Consider the following 89-residue polypeptide: Barrier-to-autointegration factor 1 (89 aa).

Belongs to the BAF family. Interacts with emr-1 and lem-2. Interacts with lem-4l, leading to decreased phosphorylation by VRK1 and promoting dephosphorylation by protein phosphatase 2A (PP2A). Post-translationally, phosphorylated by vrk-1. Phosphorylation by vrk-1 in mitosis is essential to achieve correct timing of recruitment of nuclear envelope components during nuclear envelope assembly. Dephosphorylated by protein phosphatase 2A (PP2A) following interaction with lem-4l during mitotic exit, leading to mitotic nuclear envelope reassembly.

The protein localises to the nucleus. Its function is as follows. DNA-binding protein which plays an essential role in nuclear envelope formation. Required for normal chromosome segregation during mitosis. Associates with the nuclear lamina via its interaction with LEM domain containing proteins emr-1 and lem-2. In association with lem-3, plays a role in radiation-induced DNA damage repair response. This is Barrier-to-autointegration factor 1 (baf-1) from Caenorhabditis elegans.